The sequence spans 377 residues: Queuine tRNA-ribosyltransferase (377 aa).

D94 (proton acceptor) is an active-site residue. Substrate contacts are provided by residues 94 to 98 (DSGGF), D148, Q191, and G218. The RNA binding stretch occupies residues 249-255 (GVGTPDD). D268 functions as the Nucleophile in the catalytic mechanism. The RNA binding; important for wobble base 34 recognition stretch occupies residues 273 to 277 (TRAGR).

This sequence belongs to the queuine tRNA-ribosyltransferase family. Homodimer. Within each dimer, one monomer is responsible for RNA recognition and catalysis, while the other monomer binds to the replacement base PreQ1.

The enzyme catalyses 7-aminomethyl-7-carbaguanine + guanosine(34) in tRNA = 7-aminomethyl-7-carbaguanosine(34) in tRNA + guanine. Its pathway is tRNA modification; tRNA-queuosine biosynthesis. In terms of biological role, catalyzes the base-exchange of a guanine (G) residue with the queuine precursor 7-aminomethyl-7-deazaguanine (PreQ1) at position 34 (anticodon wobble position) in tRNAs with GU(N) anticodons (tRNA-Asp, -Asn, -His and -Tyr). Catalysis occurs through a double-displacement mechanism. The nucleophile active site attacks the C1' of nucleotide 34 to detach the guanine base from the RNA, forming a covalent enzyme-RNA intermediate. The proton acceptor active site deprotonates the incoming PreQ1, allowing a nucleophilic attack on the C1' of the ribose to form the product. After dissociation, two additional enzymatic reactions on the tRNA convert PreQ1 to queuine (Q), resulting in the hypermodified nucleoside queuosine (7-(((4,5-cis-dihydroxy-2-cyclopenten-1-yl)amino)methyl)-7-deazaguanosine). The polypeptide is Queuine tRNA-ribosyltransferase (Brucella melitensis biotype 1 (strain ATCC 23456 / CCUG 17765 / NCTC 10094 / 16M)).